We begin with the raw amino-acid sequence, 948 residues long: Bifunctional uridylyltransferase/uridylyl-removing enzyme (948 aa).

The tract at residues 1–372 (METHHIDFST…RFANRSRKIP (372 aa)) is uridylyltransferase. The tract at residues 373–728 (GTVEFVEDRG…VRTDSFHAIT (356 aa)) is uridylyl-removing. One can recognise an HD domain in the interval 489–605 (VDEHLIRAVE…IDFADRVQSL (117 aa)). ACT domains are found at residues 729–810 (EITV…EVIA) and 840–921 (VIEV…ERMP).

Belongs to the GlnD family. Mg(2+) is required as a cofactor.

It carries out the reaction [protein-PII]-L-tyrosine + UTP = [protein-PII]-uridylyl-L-tyrosine + diphosphate. The enzyme catalyses [protein-PII]-uridylyl-L-tyrosine + H2O = [protein-PII]-L-tyrosine + UMP + H(+). Its activity is regulated as follows. Uridylyltransferase (UTase) activity is inhibited by glutamine, while glutamine activates uridylyl-removing (UR) activity. Modifies, by uridylylation and deuridylylation, the PII regulatory proteins (GlnB and homologs), in response to the nitrogen status of the cell that GlnD senses through the glutamine level. Under low glutamine levels, catalyzes the conversion of the PII proteins and UTP to PII-UMP and PPi, while under higher glutamine levels, GlnD hydrolyzes PII-UMP to PII and UMP (deuridylylation). Thus, controls uridylylation state and activity of the PII proteins, and plays an important role in the regulation of nitrogen fixation and metabolism. In Rhizobium tropici, this protein is Bifunctional uridylyltransferase/uridylyl-removing enzyme.